Consider the following 234-residue polypeptide: Adenosine 5'-phosphosulfate reductase (234 aa).

4 residues coordinate [4Fe-4S] cluster: Cys120, Cys121, Cys203, and Cys206. Cys229 functions as the Nucleophile; cysteine thiosulfonate intermediate in the catalytic mechanism.

The protein belongs to the PAPS reductase family. CysH subfamily. [4Fe-4S] cluster is required as a cofactor.

It is found in the cytoplasm. It carries out the reaction [thioredoxin]-disulfide + sulfite + AMP + 2 H(+) = adenosine 5'-phosphosulfate + [thioredoxin]-dithiol. Its pathway is sulfur metabolism; hydrogen sulfide biosynthesis; sulfite from sulfate. Functionally, catalyzes the formation of sulfite from adenosine 5'-phosphosulfate (APS) using thioredoxin as an electron donor. In Bacillus cereus (strain AH187), this protein is Adenosine 5'-phosphosulfate reductase.